Consider the following 239-residue polypeptide: LexA repressor (239 aa).

Residues 26-46 constitute a DNA-binding region (H-T-H motif); that stretch reads FDEMKDALDLASKSGIHRLIT. Active-site for autocatalytic cleavage activity residues include Ser159 and Lys197.

Belongs to the peptidase S24 family. Homodimer.

It carries out the reaction Hydrolysis of Ala-|-Gly bond in repressor LexA.. Its function is as follows. Represses a number of genes involved in the response to DNA damage (SOS response), including recA and lexA. In the presence of single-stranded DNA, RecA interacts with LexA causing an autocatalytic cleavage which disrupts the DNA-binding part of LexA, leading to derepression of the SOS regulon and eventually DNA repair. This Rhizobium etli (strain CIAT 652) protein is LexA repressor.